Reading from the N-terminus, the 263-residue chain is MANLTEKFLRIFARRGKSIILAYDHGIEHGPADFMDNPDSADPEYILRLARDAGFDGVVFQRGIAEKYYDGSVPLILKLNGKTTLYNGEPVSVANCSVEEAVSLGASAVGYTIYPGSGFEWKMFEELARIKRDAVKFDLPLVVWSYPRGGKVVNETAPEIVAYAARIALELGADAMKIKYTGDPKTFSWAVKVAGKVPVLMSGGPKTKTEEDFLKQVEGVLEAGALGIAVGRNVWQRRDALKFARALAELVYGGKKLAEPLNV.

Residues 24–25 (DH), histidine 29, aspartate 33, and tryptophan 144 each bind substrate. The active-site Proton donor is tyrosine 146. Substrate-binding positions include arginine 148, 177 to 179 (KIK), 202 to 204 (SGG), and 231 to 232 (GR). Lysine 177 (schiff-base intermediate with dihydroxyacetone-P) is an active-site residue.

Belongs to the DeoC/FbaB aldolase family. In terms of assembly, homodecamer (dimer of pentamers).

The protein resides in the cytoplasm. It carries out the reaction beta-D-fructose 1,6-bisphosphate = D-glyceraldehyde 3-phosphate + dihydroxyacetone phosphate. Activated by citrate. Catalyzes the reversible cleavage of fructose 1,6-bisphosphate (FBP) to glyceraldehyde 3-phosphate (GAP) and dihydroxyacetone phosphate (DHAP). This Thermoproteus tenax (strain ATCC 35583 / DSM 2078 / JCM 9277 / NBRC 100435 / Kra 1) protein is Fructose-bisphosphate aldolase class 1 (fba).